The sequence spans 424 residues: Histidine--tRNA ligase (424 aa).

It belongs to the class-II aminoacyl-tRNA synthetase family. As to quaternary structure, homodimer.

The protein localises to the cytoplasm. The catalysed reaction is tRNA(His) + L-histidine + ATP = L-histidyl-tRNA(His) + AMP + diphosphate + H(+). This Salmonella heidelberg (strain SL476) protein is Histidine--tRNA ligase.